Here is a 277-residue protein sequence, read N- to C-terminus: Inorganic pyrophosphatase (277 aa).

Arg80 is a binding site for diphosphate. Asp117, Asp122, and Asp154 together coordinate Mg(2+).

This sequence belongs to the PPase family. Requires Mg(2+) as cofactor.

Its subcellular location is the cytoplasm. The catalysed reaction is diphosphate + H2O = 2 phosphate + H(+). Functionally, involved in osmoadaptation. This chain is Inorganic pyrophosphatase (IPP1), found in Encephalitozoon cuniculi (strain GB-M1) (Microsporidian parasite).